Consider the following 396-residue polypeptide: Tryptophan synthase beta chain (396 aa).

K86 carries the post-translational modification N6-(pyridoxal phosphate)lysine.

The protein belongs to the TrpB family. In terms of assembly, tetramer of two alpha and two beta chains. It depends on pyridoxal 5'-phosphate as a cofactor.

It carries out the reaction (1S,2R)-1-C-(indol-3-yl)glycerol 3-phosphate + L-serine = D-glyceraldehyde 3-phosphate + L-tryptophan + H2O. It participates in amino-acid biosynthesis; L-tryptophan biosynthesis; L-tryptophan from chorismate: step 5/5. In terms of biological role, the beta subunit is responsible for the synthesis of L-tryptophan from indole and L-serine. This Aliivibrio salmonicida (strain LFI1238) (Vibrio salmonicida (strain LFI1238)) protein is Tryptophan synthase beta chain.